Here is a 610-residue protein sequence, read N- to C-terminus: DNA mismatch repair protein MutL (610 aa).

This sequence belongs to the DNA mismatch repair MutL/HexB family.

Functionally, this protein is involved in the repair of mismatches in DNA. It is required for dam-dependent methyl-directed DNA mismatch repair. May act as a 'molecular matchmaker', a protein that promotes the formation of a stable complex between two or more DNA-binding proteins in an ATP-dependent manner without itself being part of a final effector complex. The polypeptide is DNA mismatch repair protein MutL (Rickettsia peacockii (strain Rustic)).